Here is an 80-residue protein sequence, read N- to C-terminus: Protein FAM229B (80 aa).

The disordered stretch occupies residues 1 to 44 (MPFQFGTQPRRFPVEGGDSSIELEPGLSSSAACNGKEMSPTRQL).

The protein belongs to the FAM229 family.

This is Protein FAM229B (FAM229B) from Homo sapiens (Human).